Here is a 525-residue protein sequence, read N- to C-terminus: MEEKSKSRGWCGWFIAIIVLASVILAVVYTVKLRTKKSGDDDGGGPVPGPPGAIDKKYADALKLALQFFDIQKSGKLENNKIPWRGDSGLKDGSEDNLDLSKGLYDAGDHIKFGFPMAFTATVLSWSILEYGDQMNAVNQLDPAKDSLRWITDYLIKAHPSDNVLYIQVGDPKVDHPCWERPEDMKEKRPLTKIDVDTPGTEVAAETAAAMASASLVFKDSDPTYSATLLKHAKQLFNFADTKRGSYSVNIPEVQKFYNSTGYGDELLWAASWLYHATEDKTYLDYVSNHGKEFASFGNPTWFSWDNKLAGTQVLLSRLLFFKKDLSGSKGLGNYRNTAKAVMCGLLPKSPTSTASRTNGGLIWVSEWNSMQQSVSSAFLASLFSDYMLTSRIHKISCDGKIFKATELRDFAKSQADYMLGKNPLGTSFVVGYGDKYPQFVHHRGASIPADATTGCLDGFKWFNSTKPNPNIAYGALVGGPFFNETFTDSRENPMQNEPTTYNNALLVGLLSSLVTTSSTLQSLK.

Positions 1-26 (MEEKSKSRGWCGWFIAIIVLASVILA) are cleaved as a signal peptide. Catalysis depends on D109, which acts as the Nucleophile. A glycan (N-linked (GlcNAc...) asparagine) is linked at N259. Residue H442 is part of the active site. N-linked (GlcNAc...) asparagine glycosylation is found at N464 and N484. Residues D489 and E498 contribute to the active site.

The protein belongs to the glycosyl hydrolase 9 (cellulase E) family.

Its subcellular location is the secreted. It catalyses the reaction Endohydrolysis of (1-&gt;4)-beta-D-glucosidic linkages in cellulose, lichenin and cereal beta-D-glucans.. The chain is Endoglucanase 10 from Arabidopsis thaliana (Mouse-ear cress).